Reading from the N-terminus, the 267-residue chain is Tryptophan synthase alpha chain (267 aa).

Catalysis depends on proton acceptor residues Glu49 and Asp60.

Belongs to the TrpA family. Tetramer of two alpha and two beta chains.

It carries out the reaction (1S,2R)-1-C-(indol-3-yl)glycerol 3-phosphate + L-serine = D-glyceraldehyde 3-phosphate + L-tryptophan + H2O. Its pathway is amino-acid biosynthesis; L-tryptophan biosynthesis; L-tryptophan from chorismate: step 5/5. In terms of biological role, the alpha subunit is responsible for the aldol cleavage of indoleglycerol phosphate to indole and glyceraldehyde 3-phosphate. The sequence is that of Tryptophan synthase alpha chain from Acinetobacter baumannii (strain AB307-0294).